The following is a 177-amino-acid chain: MKQSLTLVFLVAIGYATAHTTSHDYSGGYGGGCYGSDCDSGYGDSGYGGGCTGGDCGGGYGGGYGGGCSGGDCGNYGGGYGGDCNGGDCGNYGGGYGGGNGGGCSGGNCGGGFDEAFPAPYGGDYGNGGNGFGKGGSKGNNYGKGYGGGSGKGKGGGKGGKGGKGGTYKPSHYGGGY.

An N-terminal signal peptide occupies residues methionine 1–alanine 18. Tandem repeats lie at residues tyrosine 25–glycine 41, tyrosine 42–glycine 59, tyrosine 60–asparagine 75, tyrosine 76–asparagine 91, and tyrosine 92–glycine 112. A 5 X approximate tandem repeats region spans residues tyrosine 25–glycine 112. The span at glycine 149–glycine 166 shows a compositional bias: gly residues. The tract at residues glycine 149–tyrosine 177 is disordered.

The chain is Eggshell protein from Schistosoma mansoni (Blood fluke).